A 726-amino-acid polypeptide reads, in one-letter code: Germacradienol/geosmin synthase (726 aa).

The tract at residues threonine 2–leucine 354 is germacradienol/germacrene D synthase. 9 residues coordinate Mg(2+): aspartate 86, glutamate 91, asparagine 267, threonine 271, glutamine 276, aspartate 455, asparagine 598, serine 602, and glutamate 606. The short motif at aspartate 86–glutamate 91 is the DDXXD motif 1; degenerate element. Residues alanine 355 to histidine 726 are geosmin synthase. The short motif at aspartate 455–proline 459 is the DDXXD motif 2; degenerate element.

This sequence belongs to the terpene synthase family. Mg(2+) serves as cofactor.

The enzyme catalyses (2E,6E)-farnesyl diphosphate + H2O = (1E,4S,5E,7R)-germacra-1(10),5-dien-11-ol + diphosphate. It carries out the reaction (1E,4S,5E,7R)-germacra-1(10),5-dien-11-ol + H2O = (-)-geosmin + acetone. It catalyses the reaction (2E,6E)-farnesyl diphosphate = (-)-germacrene D + diphosphate. Its pathway is secondary metabolite biosynthesis; geosmin biosynthesis. It participates in sesquiterpene biosynthesis; germacradienol biosynthesis; germacradienol from farnesyl diphosphate: step 1/1. The protein operates within sesquiterpene biosynthesis; germacrene D biosynthesis; germacrene D from farnesyl diphosphate: step 1/1. Tow-domain protein where the N-terminal domain catalyzes the cyclization of farnesyl diphosphate (FPP) to a 85:15 mixture of the sesquiterpene alcohol germacradienol and the sesquiterpene hydrocarbon germacrene D. The C-terminal domain partially converts the germacradienol formed into geosmin, the characteristic odoriferous ('earthy aroma') constituent of Streptomyces species. The protein is Germacradienol/geosmin synthase (cyc2) of Streptomyces coelicolor (strain ATCC BAA-471 / A3(2) / M145).